The sequence spans 475 residues: Dihydrolipoyl dehydrogenase (475 aa).

FAD is bound by residues 39 to 47 (EKDAYGGTC), Lys-56, and Ala-118. An intrachain disulfide couples Cys-47 to Cys-52. Residues 186–190 (GGGYI), Glu-209, and 275–278 (AVGR) contribute to the NAD(+) site. Residues Asp-318 and Ala-327 each coordinate FAD. Residue His-451 is the Proton acceptor of the active site.

The protein belongs to the class-I pyridine nucleotide-disulfide oxidoreductase family. As to quaternary structure, homodimer. The cofactor is FAD.

The protein resides in the cytoplasm. The enzyme catalyses N(6)-[(R)-dihydrolipoyl]-L-lysyl-[protein] + NAD(+) = N(6)-[(R)-lipoyl]-L-lysyl-[protein] + NADH + H(+). The protein is Dihydrolipoyl dehydrogenase (lpdA) of Haloferax volcanii (strain ATCC 29605 / DSM 3757 / JCM 8879 / NBRC 14742 / NCIMB 2012 / VKM B-1768 / DS2) (Halobacterium volcanii).